The following is a 74-amino-acid chain: Veswaprin-a (74 aa).

A signal peptide spans 1–24 (MSSGGLLLLLGLLTLWAEVTPISG). Residues 27–71 (RPKKPGLCPPRPQKPCVKECKNDWSCPGQQKCCNYGCIDECRDPI) form the WAP domain. 4 disulfides stabilise this stretch: Cys34-Cys59, Cys42-Cys63, Cys46-Cys58, and Cys52-Cys67.

Belongs to the venom waprin family. Expressed by the venom gland.

It localises to the secreted. Damages membranes of susceptible bacteria. Has no hemolytic activity. Not toxic to mice. Does not inhibit the proteinases elastase and cathepsin G. The chain is Veswaprin-a from Demansia vestigiata (Lesser black whip snake).